Here is a 390-residue protein sequence, read N- to C-terminus: MPTLLRILRPPRSPFTRCLATFATPSSSGSSSRSKFTESLETGPGLDDFISEEVPDRVVLGNTKGPRLPSYLKTSIPSGASFNKIKKDLRGLGLHTVCEEARCPNIGDCWGGKPGATEAEGRSAATATIMLMGDTCTRGCRFCSVKTSRTPPPLDPHEPENTAEAISRWGLGYIVLTSVDRDDLLDGGAHHFAETIRKIKYKAPQILVEALTGDFAGSLDHVSIVAQSGLDVYAHNIETVEELTPFVRDRRATFRQSLKVLEHAKKSGVRITKTSIMLGVGETKEQVLAALKELRKIDVDVVTFGQYMRPTKRHMKVDRYVEPAEFDNWKEVAENLGFLYVASGPLVRSSYKAGEFYIENVLRGKNKAIGGLGISQLEGSEKGSMTGIDR.

The transit peptide at 1–19 (MPTLLRILRPPRSPFTRCL) directs the protein to the mitochondrion. The interval 23–48 (ATPSSSGSSSRSKFTESLETGPGLDD) is disordered. Residues Cys-98, Cys-103, Cys-109, Cys-136, Cys-140, Cys-143, and Ser-350 each contribute to the [4Fe-4S] cluster site. The region spanning 119–339 (AEGRSAATAT…KEVAENLGFL (221 aa)) is the Radical SAM core domain.

The protein belongs to the radical SAM superfamily. Lipoyl synthase family. The cofactor is [4Fe-4S] cluster.

The protein resides in the mitochondrion. The catalysed reaction is [[Fe-S] cluster scaffold protein carrying a second [4Fe-4S](2+) cluster] + N(6)-octanoyl-L-lysyl-[protein] + 2 oxidized [2Fe-2S]-[ferredoxin] + 2 S-adenosyl-L-methionine + 4 H(+) = [[Fe-S] cluster scaffold protein] + N(6)-[(R)-dihydrolipoyl]-L-lysyl-[protein] + 4 Fe(3+) + 2 hydrogen sulfide + 2 5'-deoxyadenosine + 2 L-methionine + 2 reduced [2Fe-2S]-[ferredoxin]. It participates in protein modification; protein lipoylation via endogenous pathway; protein N(6)-(lipoyl)lysine from octanoyl-[acyl-carrier-protein]: step 2/2. Catalyzes the radical-mediated insertion of two sulfur atoms into the C-6 and C-8 positions of the octanoyl moiety bound to the lipoyl domains of lipoate-dependent enzymes, thereby converting the octanoylated domains into lipoylated derivatives. The sequence is that of Lipoyl synthase, mitochondrial from Laccaria bicolor (strain S238N-H82 / ATCC MYA-4686) (Bicoloured deceiver).